The sequence spans 37 residues: Neuropeptide Y1-like conopeptide (37 aa).

Phenylalanine amide is present on F37.

Belongs to the NPY family. Expressed by the venom duct.

The protein localises to the secreted. Its function is as follows. Causes hyperactivity such as jumping, rapid circling and tail flicking, when intraventricularly injected into mice brain. In Conus betulinus (Beech cone), this protein is Neuropeptide Y1-like conopeptide.